Here is a 783-residue protein sequence, read N- to C-terminus: Cation/H(+) antiporter 2 (783 aa).

The next 12 membrane-spanning stretches (helical) occupy residues 19-39, 43-63, 81-101, 121-141, 145-165, 186-206, 208-228, 242-262, 300-320, 323-343, 355-375, and 391-411; these read LNTM…FYLL, CGQA…PVLL, YYSF…GLEV, FVVS…LFGI, YFTF…PVVV, ALFI…FISG, IILE…INMV, YLSK…GITI, EFVL…IALT, FYLG…IGVI, YWLF…LLLD, and MMVA…SFLL.

This sequence belongs to the monovalent cation:proton antiporter 2 (CPA2) transporter (TC 2.A.37) family. CHX (TC 2.A.37.4) subfamily. As to expression, specifically expressed in pollen.

Its subcellular location is the membrane. May operate as a cation/H(+) antiporter. This is Cation/H(+) antiporter 2 (CHX2) from Arabidopsis thaliana (Mouse-ear cress).